A 241-amino-acid chain; its full sequence is Major microneme antigen (241 aa).

A signal peptide spans 1 to 34 (MTLPIHFPRCVLYGMASAVWSILFLHILVGDTMS). The propeptide occupies 35 to 103 (AADALSWSGG…ATGRGPSFVH (69 aa)). Residues 64–83 (GKELEQQHGGEEQQMQRDTK) are compositionally biased toward basic and acidic residues. The tract at residues 64–90 (GKELEQQHGGEEQQMQRDTKPAAFSNP) is disordered. PAN domains lie at 112-181 (CFPH…PRSC) and 185-241 (CTDN…VERA). 6 cysteine pairs are disulfide-bonded: C112/C181, C137/C159, C141/C147, C185/C189, C210/C230, and C214/C220. S121 contacts a carbohydrate. The a carbohydrate site is built by K162, Y169, and D174.

This sequence belongs to the microneme antigen family. In terms of assembly, homodimer or heterodimer of major microneme antigen and microneme antigen. Contains six disulfide bonds.

It localises to the cytoplasmic vesicle. Its subcellular location is the secretory vesicle. The protein resides in the microneme. Its function is as follows. Galactose-binding lectin. Plays a role in adhesion to the host cell. Has a potential role in invasion of host cells. In Sarcocystis muris, this protein is Major microneme antigen.